The chain runs to 577 residues: Probable ATP-dependent RNA helicase DDX55 homolog (577 aa).

The Q motif signature appears at 7–37; it reads AVATKTYREKLGPEILEVFDKSYKSFTDVQV. A Helicase ATP-binding domain is found at 40–218; it reads GTHLLNLSDV…VFGLRNAKQV (179 aa). 53–60 is a binding site for ATP; it reads SPTGSGKT. The DEAD box signature appears at 166–169; sequence DEAD. The Helicase C-terminal domain occupies 231-393; that stretch reads TLKNYFVECP…EVKVPTSTSR (163 aa). The tract at residues 508–577 is disordered; sequence AKEKKRREKE…LSKKEIKDVL (70 aa). The span at 510–530 shows a compositional bias: basic residues; the sequence is EKKRREKEARKMKRAGGRFKS.

Belongs to the DEAD box helicase family. DDX55/SPB4 subfamily.

The enzyme catalyses ATP + H2O = ADP + phosphate + H(+). In terms of biological role, probable ATP-binding RNA helicase. The chain is Probable ATP-dependent RNA helicase DDX55 homolog from Caenorhabditis briggsae.